The sequence spans 316 residues: 4-diphosphocytidyl-2-C-methyl-D-erythritol kinase (316 aa).

Lys11 is a catalytic residue. 99 to 109 provides a ligand contact to ATP; it reads PVAAGLAGGST. The active site involves Asp141.

Belongs to the GHMP kinase family. IspE subfamily.

It catalyses the reaction 4-CDP-2-C-methyl-D-erythritol + ATP = 4-CDP-2-C-methyl-D-erythritol 2-phosphate + ADP + H(+). Its pathway is isoprenoid biosynthesis; isopentenyl diphosphate biosynthesis via DXP pathway; isopentenyl diphosphate from 1-deoxy-D-xylulose 5-phosphate: step 3/6. Functionally, catalyzes the phosphorylation of the position 2 hydroxy group of 4-diphosphocytidyl-2C-methyl-D-erythritol. This is 4-diphosphocytidyl-2-C-methyl-D-erythritol kinase from Gloeothece citriformis (strain PCC 7424) (Cyanothece sp. (strain PCC 7424)).